The primary structure comprises 458 residues: Bifunctional thioredoxin reductase/thioredoxin (458 aa).

Residues 1–321 (MNTTPSAHET…LAEHAGSKAN (321 aa)) are thioredoxin reductase. FAD-binding positions include 19 to 22 (SGPA), 41 to 48 (EGTSFGGA), N57, and V90. A disulfide bond links C142 and C145. Residues S163, H182, R188, I245, and Y265 each contribute to the NADP(+) site. FAD is bound by residues D285 and 292 to 295 (RQAI). R292 is a binding site for NADP(+). The tract at residues 322–347 (ETTEETGDVDSTDTTDWSTAMTDAKN) is linker. The 115-residue stretch at 341–455 (AMTDAKNAGV…LLRDLSDVVP (115 aa)) folds into the Thioredoxin domain. Cysteines 379 and 382 form a disulfide.

The protein in the N-terminal section; belongs to the class-II pyridine nucleotide-disulfide oxidoreductase family. Homodimer. FAD is required as a cofactor.

Its subcellular location is the cytoplasm. It catalyses the reaction [thioredoxin]-dithiol + NADP(+) = [thioredoxin]-disulfide + NADPH + H(+). This is Bifunctional thioredoxin reductase/thioredoxin (trxB/A) from Mycobacterium leprae (strain TN).